We begin with the raw amino-acid sequence, 216 residues long: Endo-1,4-beta-xylanase 2 (216 aa).

Residues 1–27 (MVSFSSLFVAACAAVTAFALPNELEKR) form the signal peptide. Residues 28 to 216 (AITSNEQGTN…SSGSASITVS (189 aa)) form the GH11 domain. Asparagine 87 is a glycosylation site (N-linked (GlcNAc...) asparagine). Catalysis depends on glutamate 112, which acts as the Nucleophile. Glutamate 203 acts as the Proton donor in catalysis.

The protein belongs to the glycosyl hydrolase 11 (cellulase G) family.

Its subcellular location is the secreted. It carries out the reaction Endohydrolysis of (1-&gt;4)-beta-D-xylosidic linkages in xylans.. It participates in glycan degradation; xylan degradation. In terms of biological role, endo-1,4-beta-xylanase involved in the hydrolysis of xylan, a major structural heterogeneous polysaccharide found in plant biomass representing the second most abundant polysaccharide in the biosphere, after cellulose. The polypeptide is Endo-1,4-beta-xylanase 2 (xyn2) (Rhizopus oryzae (Mucormycosis agent)).